The following is a 432-amino-acid chain: Enolase (432 aa).

Position 163 (Gln163) interacts with (2R)-2-phosphoglycerate. The active-site Proton donor is Glu205. Positions 242, 285, and 312 each coordinate Mg(2+). The (2R)-2-phosphoglycerate site is built by Lys337, Arg366, Ser367, and Lys388. The active-site Proton acceptor is Lys337.

It belongs to the enolase family. Mg(2+) is required as a cofactor.

It localises to the cytoplasm. The protein resides in the secreted. Its subcellular location is the cell surface. The catalysed reaction is (2R)-2-phosphoglycerate = phosphoenolpyruvate + H2O. Its pathway is carbohydrate degradation; glycolysis; pyruvate from D-glyceraldehyde 3-phosphate: step 4/5. Catalyzes the reversible conversion of 2-phosphoglycerate (2-PG) into phosphoenolpyruvate (PEP). It is essential for the degradation of carbohydrates via glycolysis. In Bifidobacterium adolescentis (strain ATCC 15703 / DSM 20083 / NCTC 11814 / E194a), this protein is Enolase.